Reading from the N-terminus, the 388-residue chain is STE20-related kinase adapter protein strd-1 (388 aa).

In terms of domain architecture, Protein kinase spans 52–335 (YDCVRYMGTC…ASDLKSSAWL (284 aa)). Residues 58 to 66 (MGTCNGGQI) and K82 contribute to the ATP site.

It belongs to the protein kinase superfamily. STE Ser/Thr protein kinase family. STE20 subfamily. As to quaternary structure, interacts with sad-1. Interacts with par-4. Expressed in nervous system, pharynx and excretory canal. Expressed in germline.

Its subcellular location is the perikaryon. It localises to the nucleus. It is found in the cell projection. The protein localises to the dendrite. The protein resides in the axon. Its subcellular location is the synapse. It localises to the cytoplasm. It is found in the cell cortex. In terms of biological role, pseudokinase which may act as an adapter for kinases sad-1 and par-4 and thereby is involved in several developmental processes. Regulates cell-autonomously both neuronal polarity and synaptic organization when bound to sad-1. Required for sad-1 localization to synapses. Required to establish germline stem cell (GSC) quiescence during dauer development, to promote cell shedding during embryogenesis and to control asymmetric cell division of the Q.p neuroblast lineage, probably when bound to par-4. May be involved in maintaining the integrity of the early embryonic cortex when bound to par-4. In Caenorhabditis elegans, this protein is STE20-related kinase adapter protein strd-1.